The following is a 400-amino-acid chain: Golgin-45 (400 aa).

Residues 1-16 (MTTKNLETKVTVTSSP) show a composition bias toward polar residues. Residues 1 to 58 (MTTKNLETKVTVTSSPIRGAGDGMETEEPPKSVEVTSGVQSRKHHSLQSPWKKAVPSE) are disordered. S15 bears the Phosphoserine mark. Positions 18-22 (RGAGD) match the Tankyrase-binding motif motif. The residue at position 49 (S49) is a Phosphoserine. The stretch at 120–213 (NKELSEVKNV…QLERMSIQCD (94 aa)) forms a coiled coil. A Phosphothreonine modification is found at T348. A Phosphoserine modification is found at S353. The segment at 394 to 400 (RGELIAL) is essential for interaction with GORASP2.

In terms of assembly, interacts with GORASP2. Interacts with the GTP-bound form of RAB2, but not with other Golgi Rab proteins. Identified in a complex with RAB2 and GORASP2. In terms of processing, ADP-ribosylated by tankyrase TNKS and TNKS2. Poly-ADP-ribosylated protein is recognized by RNF146, followed by ubiquitination. Post-translationally, ubiquitinated by RNF146 when poly-ADP-ribosylated, leading to its degradation. Detected in adrenal gland.

It is found in the golgi apparatus membrane. The protein resides in the nucleus. Its subcellular location is the cytoplasm. Required for normal Golgi structure and for protein transport from the endoplasmic reticulum (ER) through the Golgi apparatus to the cell surface. This is Golgin-45 (BLZF1) from Homo sapiens (Human).